The primary structure comprises 382 residues: Bestrophin-6 (382 aa).

4 helical membrane passes run 29–49 (WKLI…VLAI), 68–88 (FINF…TTIV), 231–251 (LAYP…CAFA), and 265–285 (VIHY…MGWL).

The protein belongs to the anion channel-forming bestrophin (TC 1.A.46) family. Calcium-sensitive chloride channel subfamily.

It is found in the membrane. This is Bestrophin-6 (best-6) from Caenorhabditis elegans.